The chain runs to 56 residues: Conotoxin Cal6.41a (56 aa).

A signal peptide spans 1–23 (MSGSGAMLLGLLILVAMATSLDT). Cystine bridges form between Cys-27–Cys-41, Cys-33–Cys-50, and Cys-40–Cys-54.

In terms of tissue distribution, expressed by the venom duct.

The protein localises to the secreted. In terms of biological role, probable neurotoxin. This is Conotoxin Cal6.41a from Californiconus californicus (California cone).